The sequence spans 375 residues: 4-hydroxy-3-methylbut-2-en-1-yl diphosphate synthase (flavodoxin) (375 aa).

[4Fe-4S] cluster contacts are provided by Cys270, Cys273, Cys305, and Glu312.

Belongs to the IspG family. [4Fe-4S] cluster is required as a cofactor.

It carries out the reaction (2E)-4-hydroxy-3-methylbut-2-enyl diphosphate + oxidized [flavodoxin] + H2O + 2 H(+) = 2-C-methyl-D-erythritol 2,4-cyclic diphosphate + reduced [flavodoxin]. Its pathway is isoprenoid biosynthesis; isopentenyl diphosphate biosynthesis via DXP pathway; isopentenyl diphosphate from 1-deoxy-D-xylulose 5-phosphate: step 5/6. Its function is as follows. Converts 2C-methyl-D-erythritol 2,4-cyclodiphosphate (ME-2,4cPP) into 1-hydroxy-2-methyl-2-(E)-butenyl 4-diphosphate. In Yersinia pestis (strain Pestoides F), this protein is 4-hydroxy-3-methylbut-2-en-1-yl diphosphate synthase (flavodoxin).